We begin with the raw amino-acid sequence, 299 residues long: Taste receptor type 2 member 19 (299 aa).

Residue M1 is a topological domain, extracellular. The chain crosses the membrane as a helical span at residues 2-22 (MCFLLIISSILVVFAFVLGNV). Topologically, residues 23–55 (ANGFIALVNVIDWVNTRKISSAEQILTALVVSR) are cytoplasmic. The chain crosses the membrane as a helical span at residues 56-76 (IGLLWVMLFLWYATVFNSALY). The Extracellular portion of the chain corresponds to 77 to 87 (GLEVRIVASNA). Residues 88–108 (WAVTNHFSMWLAASLSIFCLL) traverse the membrane as a helical segment. Topologically, residues 109 to 127 (KIANFSNLISLHLKKRIKS) are cytoplasmic. A helical membrane pass occupies residues 128–148 (VVLVILLGPLVFLICNLAVIT). Residues 149–181 (MDERVWTKEYEGNVTWKIKLRNAIHLSSLTVTT) lie on the Extracellular side of the membrane. N161 is a glycosylation site (N-linked (GlcNAc...) asparagine). A helical membrane pass occupies residues 182 to 202 (LANLIPFTLSLICFLLLICSL). At 203 to 226 (CKHLKKMRLHSKGSQDPSTKVHIK) the chain is on the cytoplasmic side. The helical transmembrane segment at 227-247 (ALQTVTSFLMLFAIYFLCIIT) threads the bilayer. Over 248-259 (STWNLRTQQSKL) the chain is Extracellular. Residues 260-280 (VLLLCQTVAIMYPSFHSFILI) traverse the membrane as a helical segment. Residues 281-299 (MGSRKLKQTFLSVLWQMTR) lie on the Cytoplasmic side of the membrane.

This sequence belongs to the G-protein coupled receptor T2R family. Expressed in subsets of taste receptor cells of the tongue and exclusively in gustducin-positive cells.

It is found in the membrane. Functionally, receptor that may play a role in the perception of bitterness and is gustducin-linked. May play a role in sensing the chemical composition of the gastrointestinal content. The activity of this receptor may stimulate alpha gustducin, mediate PLC-beta-2 activation and lead to the gating of TRPM5. The protein is Taste receptor type 2 member 19 (TAS2R19) of Homo sapiens (Human).